The chain runs to 284 residues: 4-diphosphocytidyl-2-C-methyl-D-erythritol kinase (284 aa).

Lys-14 is a catalytic residue. An ATP-binding site is contributed by 98–108 (PMGGGLGGGSS). The active site involves Asp-140.

Belongs to the GHMP kinase family. IspE subfamily.

The catalysed reaction is 4-CDP-2-C-methyl-D-erythritol + ATP = 4-CDP-2-C-methyl-D-erythritol 2-phosphate + ADP + H(+). It participates in isoprenoid biosynthesis; isopentenyl diphosphate biosynthesis via DXP pathway; isopentenyl diphosphate from 1-deoxy-D-xylulose 5-phosphate: step 3/6. Catalyzes the phosphorylation of the position 2 hydroxy group of 4-diphosphocytidyl-2C-methyl-D-erythritol. The protein is 4-diphosphocytidyl-2-C-methyl-D-erythritol kinase of Shewanella sp. (strain ANA-3).